We begin with the raw amino-acid sequence, 207 residues long: SPRY domain-containing protein 4 (207 aa).

One can recognise a B30.2/SPRY domain in the interval 12–207 (YRWGTKRWGV…HSGLEVPKGL (196 aa)). N6-acetyllysine is present on residues Lys53 and Lys130. Residue Lys139 is modified to N6-succinyllysine.

This chain is SPRY domain-containing protein 4 (Spryd4), found in Mus musculus (Mouse).